Reading from the N-terminus, the 328-residue chain is Phosphate acyltransferase (328 aa).

The protein belongs to the PlsX family. Homodimer. Probably interacts with PlsY.

The protein localises to the cytoplasm. It carries out the reaction a fatty acyl-[ACP] + phosphate = an acyl phosphate + holo-[ACP]. It participates in lipid metabolism; phospholipid metabolism. Its function is as follows. Catalyzes the reversible formation of acyl-phosphate (acyl-PO(4)) from acyl-[acyl-carrier-protein] (acyl-ACP). This enzyme utilizes acyl-ACP as fatty acyl donor, but not acyl-CoA. The protein is Phosphate acyltransferase of Geobacillus thermodenitrificans (strain NG80-2).